The primary structure comprises 94 residues: Large ribosomal subunit protein bL27 (94 aa).

Positions 1-25 are disordered; it reads MAHKKGTGSTRNGRDSQSKRLGVKR.

It belongs to the bacterial ribosomal protein bL27 family.

The protein is Large ribosomal subunit protein bL27 of Gloeothece citriformis (strain PCC 7424) (Cyanothece sp. (strain PCC 7424)).